Consider the following 660-residue polypeptide: GTP-binding protein BRASSINAZOLE INSENSITIVE PALE GREEN 2, chloroplastic (660 aa).

A chloroplast-targeting transit peptide spans 1-53; the sequence is MVVLISSTVTICNVKPKLEDGNFRVSRLIHRPEVPFFSGLSNEKKKKCAVSVM. Disordered stretches follow at residues 127–158 and 191–212; these read EGDEHVENDELAGFEMVDDDADEEEEGEDDEM and NDVELDGFAPAGVGYGNVTEEK. Residues 130–158 are compositionally biased toward acidic residues; sequence EHVENDELAGFEMVDDDADEEEEGEDDEM. One can recognise a CP-type G domain in the interval 273–457; the sequence is STRLIKPMSN…MYDTPGLLHP (185 aa).

Belongs to the TRAFAC class YlqF/YawG GTPase family. As to quaternary structure, binds to chloroplast 16S and 23S ribosomal RNAs. In terms of tissue distribution, mostly expressed in stems, petioles, leaves and flowers and, at low levels, also in roots.

It is found in the plastid. The protein resides in the chloroplast stroma. In terms of biological role, required for brassinosteroid- (BR) mediated post-transcriptional and translational regulation in the chloroplast, including accumulation of chloroplast rRNA. Involved in chloroplast differentiation. The protein is GTP-binding protein BRASSINAZOLE INSENSITIVE PALE GREEN 2, chloroplastic of Arabidopsis thaliana (Mouse-ear cress).